Reading from the N-terminus, the 297-residue chain is Iron-sulfur cluster assembly SufBD family protein ycf24 (297 aa).

Belongs to the iron-sulfur cluster assembly SufBD family.

The protein localises to the plastid. It is found in the chloroplast. The polypeptide is Iron-sulfur cluster assembly SufBD family protein ycf24 (ycf24) (Antithamnion sp. (Red alga)).